Here is a 60-residue protein sequence, read N- to C-terminus: Protein YoaG (60 aa).

In terms of assembly, homodimer.

This is Protein YoaG (yoaG) from Escherichia coli O157:H7.